The sequence spans 222 residues: Prolactin-2C5 (222 aa).

The first 29 residues, 1–29 (MLPSLIQPCSWILLLLLVNSSLLWKNVAS), serve as a signal peptide directing secretion. An intrachain disulfide couples C33 to C40. The N-linked (GlcNAc...) asparagine glycan is linked to N57. Disulfide bonds link C87–C197 and C214–C222.

The protein belongs to the somatotropin/prolactin family. Post-translationally, N-glycosylated and sialylated. Expressed in placenta (at protein level). Expressed in the tail hair follicle, with highest expression detected in the keratinocytes of the outer root sheath. Expressed in ear skin with lesser amounts in small intestine. Not detected in brain at 18 dpc, postnatal day 25 or postnatal day 55.

It localises to the secreted. This is Prolactin-2C5 from Mus musculus (Mouse).